The chain runs to 424 residues: GTPase Obg (424 aa).

Residues 1–158 (MFVDRARIYI…LWVILELKLL (158 aa)) enclose the Obg domain. Residues 159-330 (ADVGLIGFPN…LIYYAAQKLK (172 aa)) enclose the OBG-type G domain. GTP contacts are provided by residues 165–172 (GFPNVGKS), 190–194 (FTTIN), 212–215 (DIPG), 282–285 (NKMD), and 311–313 (SAA). Positions 172 and 192 each coordinate Mg(2+). The region spanning 347-424 (YTAVEEEPFN…MYDLEFEYFR (78 aa)) is the OCT domain.

Belongs to the TRAFAC class OBG-HflX-like GTPase superfamily. OBG GTPase family. In terms of assembly, monomer. The cofactor is Mg(2+).

The protein resides in the cytoplasm. Functionally, an essential GTPase which binds GTP, GDP and possibly (p)ppGpp with moderate affinity, with high nucleotide exchange rates and a fairly low GTP hydrolysis rate. Plays a role in control of the cell cycle, stress response, ribosome biogenesis and in those bacteria that undergo differentiation, in morphogenesis control. This chain is GTPase Obg, found in Acetivibrio thermocellus (strain ATCC 27405 / DSM 1237 / JCM 9322 / NBRC 103400 / NCIMB 10682 / NRRL B-4536 / VPI 7372) (Clostridium thermocellum).